Here is a 539-residue protein sequence, read N- to C-terminus: Alpha-aminoadipic semialdehyde dehydrogenase (539 aa).

The transit peptide at 1-26 (MWRVPGLLCVRVARKSKFSGSWNRPA) directs the protein to the mitochondrion. N6-acetyllysine; alternate is present on K94. Position 94 is an N6-succinyllysine; alternate (K94). NAD(+) is bound by residues 192–194 (TAF), K218, 258–259 (GT), 274–275 (GS), 274–279 (GSTQVG), and 296–297 (EL). E296 functions as the Proton acceptor in the catalytic mechanism. Residue C330 is the Nucleophile of the active site. A (S)-2-amino-6-oxohexanoate-binding site is contributed by T331. Residue E427 participates in NAD(+) binding. K462 is modified (N6-acetyllysine). (S)-2-amino-6-oxohexanoate-binding residues include G489 and A490. K500 is subject to N6-acetyllysine. N6-succinyllysine is present on K537.

It belongs to the aldehyde dehydrogenase family. In terms of assembly, homotetramer.

Its subcellular location is the cytoplasm. It localises to the cytosol. The protein resides in the nucleus. It is found in the mitochondrion. It carries out the reaction nonanal + NAD(+) + H2O = nonanoate + NADH + 2 H(+). The enzyme catalyses (S)-2-amino-6-oxohexanoate + NAD(+) + H2O = L-2-aminoadipate + NADH + 2 H(+). The catalysed reaction is betaine aldehyde + NAD(+) + H2O = glycine betaine + NADH + 2 H(+). It catalyses the reaction an aldehyde + NAD(+) + H2O = a carboxylate + NADH + 2 H(+). It carries out the reaction hexanal + NAD(+) + H2O = hexanoate + NADH + 2 H(+). The enzyme catalyses octanal + NAD(+) + H2O = octanoate + NADH + 2 H(+). The catalysed reaction is (E)-non-2-enal + NAD(+) + H2O = (E)-non-2-enoate + NADH + 2 H(+). It catalyses the reaction (E)-4-hydroxynon-2-enal + NAD(+) + H2O = (E)-4-hydroxynon-2-enoate + NADH + 2 H(+). The protein operates within amine and polyamine biosynthesis; betaine biosynthesis via choline pathway; betaine from betaine aldehyde: step 1/1. Functionally, multifunctional enzyme mediating important protective effects. Metabolizes betaine aldehyde to betaine, an important cellular osmolyte and methyl donor. Protects cells from oxidative stress by metabolizing a number of lipid peroxidation-derived aldehydes. Involved in lysine catabolism. This is Alpha-aminoadipic semialdehyde dehydrogenase (ALDH7A1) from Bos taurus (Bovine).